The following is a 323-amino-acid chain: Voltage-dependent calcium channel gamma-2 subunit (323 aa).

Residues 10–30 (MLLTTVGAFAAFSLMTIAVGT) form a helical membrane-spanning segment. Residue N48 is glycosylated (N-linked (GlcNAc...) asparagine). The next 3 helical transmembrane spans lie at 104–124 (SSIF…CIAA), 134–154 (IILS…IGII), and 182–202 (FGAL…HMFI). Positions 233 to 261 (YQRRSRSSSRSTEPSHSRDASPVGIKGFN) are disordered. S253 carries the post-translational modification Phosphoserine. Position 271 is a phosphotyrosine (Y271). Residue T321 is modified to Phosphothreonine.

It belongs to the PMP-22/EMP/MP20 family. CACNG subfamily. The L-type calcium channel is composed of five subunits: alpha-1, alpha-2/delta, beta and gamma. Interacts with the PDZ domains of DLG4/PSD-95 and DLG1/SAP97. May interact with GOPC. Acts as an auxiliary subunit for AMPA-selective glutamate receptors (AMPARs). Found in a complex with GRIA1, GRIA2, GRIA3, GRIA4, CNIH2, CNIH3, CACNG3, CACNG4, CACNG5, CACNG7 and CACNG8. Interacts with GRIA1 and GRIA2. Interacts with MPP2. Post-translationally, phosphorylation of Thr-321 impairs interaction with DLG1 and DLG4. As to expression, brain.

Its subcellular location is the membrane. It is found in the synapse. The protein resides in the synaptosome. Functionally, regulates the trafficking and gating properties of AMPA-selective glutamate receptors (AMPARs). Promotes their targeting to the cell membrane and synapses and modulates their gating properties by slowing their rates of activation, deactivation and desensitization. Does not show subunit-specific AMPA receptor regulation and regulates all AMPAR subunits. Thought to stabilize the calcium channel in an inactivated (closed) state. This chain is Voltage-dependent calcium channel gamma-2 subunit (CACNG2), found in Homo sapiens (Human).